Consider the following 276-residue polypeptide: Large ribosomal subunit protein uL2 (276 aa).

Disordered regions lie at residues 30-52 (VKGLTEGKNKSGGRNNHGRTTSR) and 224-257 (VMNPVDHPHGGGEGRTSGGRHPVTPWGKPTKGYK). The span at 41 to 52 (GGRNNHGRTTSR) shows a compositional bias: polar residues.

The protein belongs to the universal ribosomal protein uL2 family. As to quaternary structure, part of the 50S ribosomal subunit. Forms a bridge to the 30S subunit in the 70S ribosome.

In terms of biological role, one of the primary rRNA binding proteins. Required for association of the 30S and 50S subunits to form the 70S ribosome, for tRNA binding and peptide bond formation. It has been suggested to have peptidyltransferase activity; this is somewhat controversial. Makes several contacts with the 16S rRNA in the 70S ribosome. The sequence is that of Large ribosomal subunit protein uL2 from Gluconacetobacter diazotrophicus (strain ATCC 49037 / DSM 5601 / CCUG 37298 / CIP 103539 / LMG 7603 / PAl5).